Reading from the N-terminus, the 388-residue chain is tRNA-specific 2-thiouridylase MnmA (388 aa).

Residues 26 to 33 and Leu52 each bind ATP; that span reads GLSGGVDS. Catalysis depends on Cys113, which acts as the Nucleophile. A disulfide bridge connects residues Cys113 and Cys223. Residue Gly138 participates in ATP binding. Residues 173 to 175 form an interaction with tRNA region; sequence KDQ. Cys223 serves as the catalytic Cysteine persulfide intermediate. The tract at residues 328 to 329 is interaction with tRNA; it reads RY.

This sequence belongs to the MnmA/TRMU family.

Its subcellular location is the cytoplasm. It carries out the reaction S-sulfanyl-L-cysteinyl-[protein] + uridine(34) in tRNA + AH2 + ATP = 2-thiouridine(34) in tRNA + L-cysteinyl-[protein] + A + AMP + diphosphate + H(+). Functionally, catalyzes the 2-thiolation of uridine at the wobble position (U34) of tRNA, leading to the formation of s(2)U34. The protein is tRNA-specific 2-thiouridylase MnmA of Prochlorococcus marinus (strain NATL2A).